The sequence spans 423 residues: Lipoyl synthase 1, mitochondrial (423 aa).

[4Fe-4S] cluster-binding residues include C127, C132, C138, C159, C163, C166, and S375. Positions 142–364 (DEEEGTATAT…EEEAMAMGFL (223 aa)) constitute a Radical SAM core domain.

This sequence belongs to the radical SAM superfamily. Lipoyl synthase family. [4Fe-4S] cluster serves as cofactor.

The protein resides in the mitochondrion. It catalyses the reaction [[Fe-S] cluster scaffold protein carrying a second [4Fe-4S](2+) cluster] + N(6)-octanoyl-L-lysyl-[protein] + 2 oxidized [2Fe-2S]-[ferredoxin] + 2 S-adenosyl-L-methionine + 4 H(+) = [[Fe-S] cluster scaffold protein] + N(6)-[(R)-dihydrolipoyl]-L-lysyl-[protein] + 4 Fe(3+) + 2 hydrogen sulfide + 2 5'-deoxyadenosine + 2 L-methionine + 2 reduced [2Fe-2S]-[ferredoxin]. Its pathway is protein modification; protein lipoylation via endogenous pathway; protein N(6)-(lipoyl)lysine from octanoyl-[acyl-carrier-protein]: step 2/2. Its function is as follows. Catalyzes the radical-mediated insertion of two sulfur atoms into the C-6 and C-8 positions of the octanoyl moiety bound to the lipoyl domains of lipoate-dependent enzymes, thereby converting the octanoylated domains into lipoylated derivatives. The polypeptide is Lipoyl synthase 1, mitochondrial (Trypanosoma cruzi (strain CL Brener)).